The sequence spans 172 residues: Stellate protein CG33243 (172 aa).

This sequence belongs to the casein kinase 2 subunit beta family. As to quaternary structure, interacts in vitro with the casein kinase 2 alpha subunit (CkII-alpha). The relevance of such interaction is however unclear in vivo. As to expression, probably not expressed in wild-type flies. In males lacking the Y chromosome, it is testis-specific and constitutes the main component of star-shaped crystals.

Its function is as follows. Unknown. In males lacking the Y chromosome, its strong overexpression leads to the appearance of proteinaceous star-shaped crystals in the primary spermatocytes causing meiotic drive, possibly by interfering with normal casein kinase 2 activity. The protein is Stellate protein CG33243 (Ste:CG33243) of Drosophila melanogaster (Fruit fly).